A 273-amino-acid chain; its full sequence is Undecaprenyl-diphosphatase (273 aa).

8 consecutive transmembrane segments (helical) span residues 3–23 (IIEL…EFAP), 48–68 (GANT…VVVF), 89–109 (LTLM…VLFE), 116–136 (LFST…MIAA), 151–171 (ITYK…WPGF), 192–212 (ADFT…ISLL), 225–245 (FFVV…RFFL), and 253–273 (LVPF…VYFA).

It belongs to the UppP family.

It is found in the cell membrane. The catalysed reaction is di-trans,octa-cis-undecaprenyl diphosphate + H2O = di-trans,octa-cis-undecaprenyl phosphate + phosphate + H(+). Catalyzes the dephosphorylation of undecaprenyl diphosphate (UPP). Confers resistance to bacitracin. The sequence is that of Undecaprenyl-diphosphatase from Anoxybacillus flavithermus (strain DSM 21510 / WK1).